Consider the following 145-residue polypeptide: NADH-ubiquinone oxidoreductase subunit 8 (145 aa).

4Fe-4S ferredoxin-type domains are found at residues 43–73 and 83–112; these read LRFYWCGLERCIACRLCDLICPSLALDVRVG and DWFTLSYRRCIYCGFCMHVCPTDAITHSLF. Positions 53, 56, 59, 63, 92, 95, 98, and 102 each coordinate [4Fe-4S] cluster.

Belongs to the complex I 23 kDa subunit family. [4Fe-4S] cluster is required as a cofactor.

The protein localises to the mitochondrion. It catalyses the reaction a ubiquinone + NADH + 5 H(+)(in) = a ubiquinol + NAD(+) + 4 H(+)(out). Core subunit of the mitochondrial membrane respiratory chain NADH dehydrogenase (Complex I) that is believed to belong to the minimal assembly required for catalysis. Complex I functions in the transfer of electrons from NADH to the respiratory chain. The immediate electron acceptor for the enzyme is believed to be ubiquinone. May donate electrons to ubiquinone. The polypeptide is NADH-ubiquinone oxidoreductase subunit 8 (M-ISP1) (Trypanosoma brucei brucei).